Here is a 404-residue protein sequence, read N- to C-terminus: Phosphopentomutase (404 aa).

Positions 10, 303, 308, 344, 345, and 356 each coordinate Mn(2+).

The protein belongs to the phosphopentomutase family. Mn(2+) is required as a cofactor.

Its subcellular location is the cytoplasm. It catalyses the reaction 2-deoxy-alpha-D-ribose 1-phosphate = 2-deoxy-D-ribose 5-phosphate. The catalysed reaction is alpha-D-ribose 1-phosphate = D-ribose 5-phosphate. Its pathway is carbohydrate degradation; 2-deoxy-D-ribose 1-phosphate degradation; D-glyceraldehyde 3-phosphate and acetaldehyde from 2-deoxy-alpha-D-ribose 1-phosphate: step 1/2. Isomerase that catalyzes the conversion of deoxy-ribose 1-phosphate (dRib-1-P) and ribose 1-phosphate (Rib-1-P) to deoxy-ribose 5-phosphate (dRib-5-P) and ribose 5-phosphate (Rib-5-P), respectively. The sequence is that of Phosphopentomutase from Shewanella sp. (strain W3-18-1).